Here is a 189-residue protein sequence, read N- to C-terminus: 3-hydroxyanthranilate 3,4-dioxygenase (189 aa).

R46 serves as a coordination point for O2. Fe cation contacts are provided by H50, E56, and H94. E56 contacts substrate. The substrate site is built by R98 and E109. Fe cation-binding residues include C124, C127, C161, and C164.

It belongs to the 3-HAO family. As to quaternary structure, homodimer. Requires Fe(2+) as cofactor.

The enzyme catalyses 3-hydroxyanthranilate + O2 = (2Z,4Z)-2-amino-3-carboxymuconate 6-semialdehyde. Its pathway is cofactor biosynthesis; NAD(+) biosynthesis; quinolinate from L-kynurenine: step 3/3. Its function is as follows. Catalyzes the oxidative ring opening of 3-hydroxyanthranilate to 2-amino-3-carboxymuconate semialdehyde, which spontaneously cyclizes to quinolinate. The sequence is that of 3-hydroxyanthranilate 3,4-dioxygenase from Shewanella woodyi (strain ATCC 51908 / MS32).